Reading from the N-terminus, the 71-residue chain is MAVKKGDMVRAIREKLENSLEAKASDTRFPPYLFDSKGEIVDIKGDYALIKFGKVPTPNVWLRVDQLEEFK.

The protein belongs to the complex I NdhO subunit family. As to quaternary structure, NDH-1 can be composed of about 15 different subunits; different subcomplexes with different compositions have been identified which probably have different functions.

It is found in the cellular thylakoid membrane. It carries out the reaction a plastoquinone + NADH + (n+1) H(+)(in) = a plastoquinol + NAD(+) + n H(+)(out). The catalysed reaction is a plastoquinone + NADPH + (n+1) H(+)(in) = a plastoquinol + NADP(+) + n H(+)(out). Functionally, NDH-1 shuttles electrons from an unknown electron donor, via FMN and iron-sulfur (Fe-S) centers, to quinones in the respiratory and/or the photosynthetic chain. The immediate electron acceptor for the enzyme in this species is believed to be plastoquinone. Couples the redox reaction to proton translocation, and thus conserves the redox energy in a proton gradient. Cyanobacterial NDH-1 also plays a role in inorganic carbon-concentration. The polypeptide is NAD(P)H-quinone oxidoreductase subunit O (Nostoc punctiforme (strain ATCC 29133 / PCC 73102)).